A 457-amino-acid chain; its full sequence is Amidophosphoribosyltransferase (457 aa).

Cysteine 2 (nucleophile) is an active-site residue. A Glutamine amidotransferase type-2 domain is found at cysteine 2–glycine 223. Cysteine 239 lines the [4Fe-4S] cluster pocket. Residues serine 286, aspartate 348, and aspartate 349 each coordinate Mg(2+). Residues cysteine 385, cysteine 438, and cysteine 441 each contribute to the [4Fe-4S] cluster site.

In the C-terminal section; belongs to the purine/pyrimidine phosphoribosyltransferase family. It depends on Mg(2+) as a cofactor. The cofactor is [4Fe-4S] cluster.

The enzyme catalyses 5-phospho-beta-D-ribosylamine + L-glutamate + diphosphate = 5-phospho-alpha-D-ribose 1-diphosphate + L-glutamine + H2O. It participates in purine metabolism; IMP biosynthesis via de novo pathway; N(1)-(5-phospho-D-ribosyl)glycinamide from 5-phospho-alpha-D-ribose 1-diphosphate: step 1/2. Functionally, catalyzes the formation of phosphoribosylamine from phosphoribosylpyrophosphate (PRPP) and glutamine. The polypeptide is Amidophosphoribosyltransferase (Archaeoglobus fulgidus (strain ATCC 49558 / DSM 4304 / JCM 9628 / NBRC 100126 / VC-16)).